A 690-amino-acid chain; its full sequence is Methionine--tRNA ligase (690 aa).

A 'HIGH' region motif is present at residues 13–23; the sequence is PYANGQIHIGH. Positions 144, 147, 157, and 160 each coordinate Zn(2+). The short motif at 335–339 is the 'KMSKS' region element; it reads KMSKS. Lys338 is an ATP binding site. The region spanning 584–690 is the tRNA-binding domain; that stretch reads DFAKIDLRVA…SGAVPGMRIR (107 aa).

It belongs to the class-I aminoacyl-tRNA synthetase family. MetG type 1 subfamily. In terms of assembly, homodimer. The cofactor is Zn(2+).

Its subcellular location is the cytoplasm. The enzyme catalyses tRNA(Met) + L-methionine + ATP = L-methionyl-tRNA(Met) + AMP + diphosphate. Functionally, is required not only for elongation of protein synthesis but also for the initiation of all mRNA translation through initiator tRNA(fMet) aminoacylation. This Cupriavidus metallidurans (strain ATCC 43123 / DSM 2839 / NBRC 102507 / CH34) (Ralstonia metallidurans) protein is Methionine--tRNA ligase.